Here is a 2040-residue protein sequence, read N- to C-terminus: Apolipoprotein(a) (2040 aa).

The N-terminal stretch at 1–19 (MEHKEVVLLLLLFLKSAAP) is a signal peptide. 10 Kringle domains span residues 27–105 (DCYH…LTQC), 141–219 (ECYH…LTQC), 255–333 (ECYH…LTQC), 369–447 (ECYH…LTQC), 483–561 (ECYH…LTQC), 597–675 (ECYH…LTQC), 711–789 (ECYH…LTQC), 825–903 (ECYH…LTQC), 939–1017 (ECYH…LTRC), and 1053–1131 (DCYY…LTQC). 30 disulfide bridges follow: Cys-28-Cys-105, Cys-49-Cys-88, Cys-77-Cys-100, Cys-142-Cys-219, Cys-163-Cys-202, Cys-191-Cys-214, Cys-256-Cys-333, Cys-277-Cys-316, Cys-305-Cys-328, Cys-370-Cys-447, Cys-391-Cys-430, Cys-419-Cys-442, Cys-484-Cys-561, Cys-505-Cys-544, Cys-533-Cys-556, Cys-598-Cys-675, Cys-619-Cys-658, Cys-647-Cys-670, Cys-712-Cys-789, Cys-733-Cys-772, Cys-761-Cys-784, Cys-826-Cys-903, Cys-847-Cys-886, Cys-875-Cys-898, Cys-940-Cys-1017, Cys-961-Cys-1000, Cys-989-Cys-1012, Cys-1054-Cys-1131, Cys-1075-Cys-1114, and Cys-1103-Cys-1126. A glycan (N-linked (GlcNAc...) asparagine) is linked at Asn-61. N-linked (GlcNAc...) asparagine glycosylation is present at Asn-101. Residue Asn-215 is glycosylated (N-linked (GlcNAc...) asparagine). N-linked (GlcNAc...) asparagine glycosylation is present at Asn-329. A glycan (N-linked (GlcNAc...) asparagine) is linked at Asn-443. N-linked (GlcNAc...) asparagine glycosylation occurs at Asn-557. Asn-671 carries N-linked (GlcNAc...) asparagine glycosylation. An N-linked (GlcNAc...) asparagine glycan is attached at Asn-785. Residue Asn-899 is glycosylated (N-linked (GlcNAc...) asparagine). Asn-1013 carries N-linked (GlcNAc...) asparagine glycosylation. A glycan (N-linked (GlcNAc...) asparagine) is linked at Asn-1127. A disordered region spans residues 1147–1166 (DPSTEASSEEAPTEQSPGVQ). 2 Kringle domains span residues 1167-1245 (DCYH…LTQC) and 1273-1351 (DCYH…LTQC). 6 cysteine pairs are disulfide-bonded: Cys-1168/Cys-1245, Cys-1189/Cys-1228, Cys-1217/Cys-1240, Cys-1274/Cys-1351, Cys-1295/Cys-1334, and Cys-1323/Cys-1346. Residue Asn-1241 is glycosylated (N-linked (GlcNAc...) asparagine). Asn-1347 and Asn-1381 each carry an N-linked (GlcNAc...) asparagine glycan. The tract at residues 1365-1388 (VPVPSTELPSEEAPTENSTGVQDC) is disordered. Residues 1387–1465 (DCYRGDGQSY…RWEYCNLTRC (79 aa)) enclose the Kringle 13 domain. 3 disulfides stabilise this stretch: Cys-1388–Cys-1465, Cys-1409–Cys-1448, and Cys-1437–Cys-1460. Residue Asn-1461 is glycosylated (N-linked (GlcNAc...) asparagine). The tract at residues 1476 to 1497 (PTVAPVPSTEAPSEQAPPEKSP) is disordered. Kringle domains lie at 1501 to 1579 (DCYH…LTQC), 1615 to 1693 (QCYH…LTRC), and 1719 to 1799 (DCMF…IPLC). 10 disulfide bridges follow: Cys-1502/Cys-1579, Cys-1523/Cys-1562, Cys-1551/Cys-1574, Cys-1616/Cys-1693, Cys-1637/Cys-1676, Cys-1665/Cys-1688, Cys-1720/Cys-1799, Cys-1741/Cys-1782, Cys-1770/Cys-1794, and Cys-1846/Cys-1862. The N-linked (GlcNAc...) asparagine glycan is linked to Asn-1575. Asn-1689 carries N-linked (GlcNAc...) asparagine glycosylation. One can recognise a Peptidase S1 domain in the interval 1820 to 2038 (IVGGCVAHPH…FVTWIEGMMR (219 aa)). Catalysis depends on charge relay system residues His-1861 and Asp-1904. 3 disulfide bridges follow: Cys-1938/Cys-1996, Cys-1968/Cys-1975, and Cys-1986/Cys-2014. The active-site Charge relay system is the Ser-1990.

It belongs to the peptidase S1 family. Plasminogen subfamily. As to quaternary structure, disulfide-linked to apo-B100. Binds to fibronectin and decorin. N- and O-glycosylated. The N-glycans are complex biantennary structures present in either a mono- or disialylated state. The O-glycans are mostly (80%) represented by the monosialylated core type I structure, NeuNAcalpha2-3Galbeta1-3GalNAc, with smaller amounts of disialylated and non-sialylated O-glycans also detected.

Its function is as follows. Apo(a) is the main constituent of lipoprotein(a) (Lp(a)). It has serine proteinase activity and is able of autoproteolysis. Inhibits tissue-type plasminogen activator 1. Lp(a) may be a ligand for megalin/Gp 330. In Homo sapiens (Human), this protein is Apolipoprotein(a) (LPA).